The chain runs to 499 residues: Glycerol kinase (499 aa).

Thr11 is an ADP binding site. ATP contacts are provided by Thr11, Ser12, and Ser13. Thr11 is a sn-glycerol 3-phosphate binding site. Arg15 lines the ADP pocket. Positions 81, 82, 133, and 242 each coordinate sn-glycerol 3-phosphate. Arg81, Glu82, Tyr133, Asp242, and Gln243 together coordinate glycerol. ADP is bound by residues Thr264 and Gly309. Residues Thr264, Gly309, Gln313, and Gly414 each coordinate ATP. Positions 414 and 418 each coordinate ADP.

This sequence belongs to the FGGY kinase family.

The catalysed reaction is glycerol + ATP = sn-glycerol 3-phosphate + ADP + H(+). Its pathway is polyol metabolism; glycerol degradation via glycerol kinase pathway; sn-glycerol 3-phosphate from glycerol: step 1/1. Its activity is regulated as follows. Inhibited by fructose 1,6-bisphosphate (FBP). Its function is as follows. Key enzyme in the regulation of glycerol uptake and metabolism. Catalyzes the phosphorylation of glycerol to yield sn-glycerol 3-phosphate. The protein is Glycerol kinase of Methylibium petroleiphilum (strain ATCC BAA-1232 / LMG 22953 / PM1).